The chain runs to 310 residues: MSEPENTAEDKDAEAAISADAVESETTADGGENPAEGESAEGPRMRARRERMERREAQRRAIALEQARREAKAAAKGKYVEQGKGAGRGKVQGLQTLLLVVLLALIAVGLGSILYFTPLMSVRQTVVTGTGVVTQEDVLGALSIPKGTRLLQIDTAAAADRVASIRRVASARVQCEYPSTLRVTIVERVPVAAWTGADGTHLIDRDGVDFANEPPPPGIPALDVVAPAPQDPTTKAALQVLTSLAPDLARQVAKIAAPSVSSITLTLDDGRTIVWGTTERTAEKAEKLGALLTQPGRTYDVSSPDLPTVK.

The tract at residues Met-1–Ala-57 is disordered. The Cytoplasmic segment spans residues Met-1–Gln-95. The helical transmembrane segment at Thr-96–Phe-116 threads the bilayer. At Thr-117 to Lys-310 the chain is on the extracellular side. A POTRA domain is found at Met-120–Arg-188.

The protein belongs to the FtsQ/DivIB family. FtsQ subfamily.

It is found in the cell membrane. Functionally, essential cell division protein. The protein is Cell division protein FtsQ of Mycobacteroides abscessus (strain ATCC 19977 / DSM 44196 / CCUG 20993 / CIP 104536 / JCM 13569 / NCTC 13031 / TMC 1543 / L948) (Mycobacterium abscessus).